Here is a 181-residue protein sequence, read N- to C-terminus: Protein GrpE (181 aa).

A compositionally biased stretch (polar residues) spans 1 to 13; that stretch reads MENTQENPATQSA. Residues 1–39 form a disordered region; it reads MENTQENPATQSAEDIGSEKQAAQGAAPAAEAADAALAE. The span at 21-39 shows a compositional bias: low complexity; it reads QAAQGAAPAAEAADAALAE.

Belongs to the GrpE family. In terms of assembly, homodimer.

Its subcellular location is the cytoplasm. Its function is as follows. Participates actively in the response to hyperosmotic and heat shock by preventing the aggregation of stress-denatured proteins, in association with DnaK and GrpE. It is the nucleotide exchange factor for DnaK and may function as a thermosensor. Unfolded proteins bind initially to DnaJ; upon interaction with the DnaJ-bound protein, DnaK hydrolyzes its bound ATP, resulting in the formation of a stable complex. GrpE releases ADP from DnaK; ATP binding to DnaK triggers the release of the substrate protein, thus completing the reaction cycle. Several rounds of ATP-dependent interactions between DnaJ, DnaK and GrpE are required for fully efficient folding. This is Protein GrpE from Burkholderia lata (strain ATCC 17760 / DSM 23089 / LMG 22485 / NCIMB 9086 / R18194 / 383).